The following is a 735-amino-acid chain: Translation factor GUF1 homolog, chloroplastic (735 aa).

Disordered stretches follow at residues 1–38 and 106–126; these read MAVP…PSTS and PENA…GVDN. The N-terminal 47 residues, 1-47, are a transit peptide targeting the chloroplast; the sequence is MAVPTIPSPACISQSANGSIISTRRSTETNPRQHPSTSYRCAGRVVR. Residues 11 to 38 show a composition bias toward polar residues; sequence CISQSANGSIISTRRSTETNPRQHPSTS. The segment covering 106 to 115 has biased composition (basic and acidic residues); the sequence is PENAEKDYSK. One can recognise a tr-type G domain in the interval 137 to 319; sequence SNIRNFSIIA…AVVKKIPPPK (183 aa). Residues 146–153, 212–216, and 266–269 contribute to the GTP site; these read AHIDHGKS, DTPGH, and NKID.

It belongs to the TRAFAC class translation factor GTPase superfamily. Classic translation factor GTPase family. LepA subfamily.

Its subcellular location is the plastid. The protein localises to the chloroplast. It catalyses the reaction GTP + H2O = GDP + phosphate + H(+). Its function is as follows. Promotes chloroplast protein synthesis. May act as a fidelity factor of the translation reaction, by catalyzing a one-codon backward translocation of tRNAs on improperly translocated ribosomes. The protein is Translation factor GUF1 homolog, chloroplastic of Physcomitrium patens (Spreading-leaved earth moss).